Reading from the N-terminus, the 453-residue chain is UDP-N-acetylmuramoylalanine--D-glutamate ligase (453 aa).

Position 117-123 (117-123 (GTNGKTT)) interacts with ATP.

This sequence belongs to the MurCDEF family.

Its subcellular location is the cytoplasm. The enzyme catalyses UDP-N-acetyl-alpha-D-muramoyl-L-alanine + D-glutamate + ATP = UDP-N-acetyl-alpha-D-muramoyl-L-alanyl-D-glutamate + ADP + phosphate + H(+). It functions in the pathway cell wall biogenesis; peptidoglycan biosynthesis. Cell wall formation. Catalyzes the addition of glutamate to the nucleotide precursor UDP-N-acetylmuramoyl-L-alanine (UMA). In Caldicellulosiruptor saccharolyticus (strain ATCC 43494 / DSM 8903 / Tp8T 6331), this protein is UDP-N-acetylmuramoylalanine--D-glutamate ligase.